Consider the following 437-residue polypeptide: MNNNIVAIVGRPNVGKSTLFNRLIQRREAIVDSVSGVTRDRNYGKSEWNGKEFSVIDTGGYVRGSDDVFEGEIRKQVELAIDEADVIIFVVDVEEGITPMDETVAKLLRKVTKPVLLAVNKVDNAMREKDAIEFYNLGLGDYYTFASISGSGTGDLLDALIDAFPEKPEPAEAAEELPRFAVVGRPNAGKSSFINALIGQDRYIVTDIAGTTRDAIDTKFDRFGFEFNLVDTAGIRRKAKVKEDLEFYSVMRSVRAIEHADVCILVIDATRGFEGQDQSIFWLAEKNRKGVVILVNKWDLVEKDTMSSRDYEEKIRKELMPFTDVPILFVSALTKQRLLKALEATVQVFENRKQRISTSKFNEYMLKVIEAYPPPAMKGKYVKIKYCMQLPTQTPQFVFFANLPQYVKEPYKRYLENKIRDNWDFAGVPIDIYIREK.

2 EngA-type G domains span residues 4–168 and 178–353; these read NIVA…PEKP and PRFA…ENRK. GTP contacts are provided by residues 10-17, 57-61, 120-123, 184-191, 231-235, and 296-299; these read GRPNVGKS, DTGGY, NKVD, GRPNAGKS, DTAGI, and NKWD. Residues 354-437 enclose the KH-like domain; sequence QRISTSKFNE…VPIDIYIREK (84 aa).

This sequence belongs to the TRAFAC class TrmE-Era-EngA-EngB-Septin-like GTPase superfamily. EngA (Der) GTPase family. Associates with the 50S ribosomal subunit.

In terms of biological role, GTPase that plays an essential role in the late steps of ribosome biogenesis. In Flavobacterium johnsoniae (strain ATCC 17061 / DSM 2064 / JCM 8514 / BCRC 14874 / CCUG 350202 / NBRC 14942 / NCIMB 11054 / UW101) (Cytophaga johnsonae), this protein is GTPase Der.